A 464-amino-acid polypeptide reads, in one-letter code: Chaperone SurA (464 aa).

A signal peptide spans 1 to 25 (MTRYFSIVLSLLLAVSCVFLPVASA). PpiC domains follow at residues 175–277 (GAQY…KLVE) and 292–391 (ATEY…QRLG). Residues 439–464 (PADDHQTPSAAVIPATGAVLPSATKH) are disordered.

It localises to the periplasm. The enzyme catalyses [protein]-peptidylproline (omega=180) = [protein]-peptidylproline (omega=0). Functionally, chaperone involved in the correct folding and assembly of outer membrane proteins. Recognizes specific patterns of aromatic residues and the orientation of their side chains, which are found more frequently in integral outer membrane proteins. May act in both early periplasmic and late outer membrane-associated steps of protein maturation. In Xylella fastidiosa (strain 9a5c), this protein is Chaperone SurA.